The following is a 130-amino-acid chain: Small ribosomal subunit protein uS11 (130 aa).

Belongs to the universal ribosomal protein uS11 family. As to quaternary structure, part of the 30S ribosomal subunit. Interacts with proteins S7 and S18. Binds to IF-3.

In terms of biological role, located on the platform of the 30S subunit, it bridges several disparate RNA helices of the 16S rRNA. Forms part of the Shine-Dalgarno cleft in the 70S ribosome. The sequence is that of Small ribosomal subunit protein uS11 from Xanthomonas oryzae pv. oryzae (strain MAFF 311018).